A 295-amino-acid polypeptide reads, in one-letter code: N-acetylmuramic acid 6-phosphate etherase (295 aa).

The SIS domain occupies 53–216 (AIQRFNNGGR…STMTMIGVGK (164 aa)). Catalysis depends on glutamate 81, which acts as the Proton donor. The active site involves glutamate 112.

It belongs to the GCKR-like family. MurNAc-6-P etherase subfamily. In terms of assembly, homodimer.

It catalyses the reaction N-acetyl-D-muramate 6-phosphate + H2O = N-acetyl-D-glucosamine 6-phosphate + (R)-lactate. It functions in the pathway amino-sugar metabolism; N-acetylmuramate degradation. Specifically catalyzes the cleavage of the D-lactyl ether substituent of MurNAc 6-phosphate, producing GlcNAc 6-phosphate and D-lactate. The sequence is that of N-acetylmuramic acid 6-phosphate etherase from Staphylococcus epidermidis (strain ATCC 35984 / DSM 28319 / BCRC 17069 / CCUG 31568 / BM 3577 / RP62A).